Consider the following 222-residue polypeptide: Eukaryotic translation initiation factor 3 subunit K (222 aa).

The PCI domain maps to 46–208; it reads YDLEANLAVL…KIKTKNITEK (163 aa).

This sequence belongs to the eIF-3 subunit K family. Component of the eukaryotic translation initiation factor 3 (eIF-3) complex. The eIF-3 complex interacts with pix.

The protein resides in the cytoplasm. In terms of biological role, component of the eukaryotic translation initiation factor 3 (eIF-3) complex, which is involved in protein synthesis of a specialized repertoire of mRNAs and, together with other initiation factors, stimulates binding of mRNA and methionyl-tRNAi to the 40S ribosome. The eIF-3 complex specifically targets and initiates translation of a subset of mRNAs involved in cell proliferation. The polypeptide is Eukaryotic translation initiation factor 3 subunit K (Drosophila grimshawi (Hawaiian fruit fly)).